A 190-amino-acid polypeptide reads, in one-letter code: Ras-like GTP-binding protein RhoL (190 aa).

Residue 18–25 coordinates GTP; that stretch reads GDGMVGKT. Residues 40–48 carry the Effector region motif; that stretch reads YIPTVFDNH. GTP-binding positions include 65–69 and 123–126; these read DTAGQ and TKLD. C187 carries the cysteine methyl ester modification. The S-geranylgeranyl cysteine moiety is linked to residue C187. Positions 188–190 are cleaved as a propeptide — removed in mature form; sequence KIL.

The protein belongs to the small GTPase superfamily. Rho family. Highly expressed in the embryonic cephalic mesoderm starting from stage 6 and fading by stage 11. Hemocyte precursor cells.

The protein resides in the cell membrane. Its function is as follows. Essential for the maturation of hemocytes. This is Ras-like GTP-binding protein RhoL (RhoL) from Drosophila melanogaster (Fruit fly).